A 254-amino-acid polypeptide reads, in one-letter code: Alcohol dehydrogenase (254 aa).

An NAD(+)-binding site is contributed by 10 to 33 (FVAGLGGIGLDTSREIVKSGPKNL). Serine 138 contributes to the substrate binding site. The active-site Proton acceptor is the tyrosine 151.

The protein belongs to the short-chain dehydrogenases/reductases (SDR) family. Homodimer.

The catalysed reaction is a primary alcohol + NAD(+) = an aldehyde + NADH + H(+). It catalyses the reaction a secondary alcohol + NAD(+) = a ketone + NADH + H(+). This is Alcohol dehydrogenase (Adh) from Drosophila heteroneura (Fruit fly).